A 91-amino-acid polypeptide reads, in one-letter code: Acylphosphatase (91 aa).

The region spanning 4–91 (RAMVTVKGMV…GEFDDFHIAY (88 aa)) is the Acylphosphatase-like domain. Catalysis depends on residues arginine 19 and asparagine 37.

This sequence belongs to the acylphosphatase family.

The catalysed reaction is an acyl phosphate + H2O = a carboxylate + phosphate + H(+). This chain is Acylphosphatase (acyP), found in Geotalea uraniireducens (strain Rf4) (Geobacter uraniireducens).